We begin with the raw amino-acid sequence, 235 residues long: Lipoprotein-releasing system ATP-binding protein LolD (235 aa).

In terms of domain architecture, ABC transporter spans 5 to 235 (FALANIYKSF…SIDESGFNKI (231 aa)). Residue 40-47 (GKSGSGKS) coordinates ATP.

The protein belongs to the ABC transporter superfamily. Lipoprotein translocase (TC 3.A.1.125) family. As to quaternary structure, the complex is composed of two ATP-binding proteins (LolD) and two transmembrane proteins (LolC and LolE).

The protein resides in the cell inner membrane. Functionally, part of the ABC transporter complex LolCDE involved in the translocation of mature outer membrane-directed lipoproteins, from the inner membrane to the periplasmic chaperone, LolA. Responsible for the formation of the LolA-lipoprotein complex in an ATP-dependent manner. This chain is Lipoprotein-releasing system ATP-binding protein LolD, found in Ehrlichia chaffeensis (strain ATCC CRL-10679 / Arkansas).